A 475-amino-acid polypeptide reads, in one-letter code: L-seryl-tRNA(Sec) selenium transferase (475 aa).

The residue at position 295 (lysine 295) is an N6-(pyridoxal phosphate)lysine.

This sequence belongs to the SelA family. Requires pyridoxal 5'-phosphate as cofactor.

It localises to the cytoplasm. The enzyme catalyses L-seryl-tRNA(Sec) + selenophosphate + H(+) = L-selenocysteinyl-tRNA(Sec) + phosphate. The protein operates within aminoacyl-tRNA biosynthesis; selenocysteinyl-tRNA(Sec) biosynthesis; selenocysteinyl-tRNA(Sec) from L-seryl-tRNA(Sec) (bacterial route): step 1/1. Functionally, converts seryl-tRNA(Sec) to selenocysteinyl-tRNA(Sec) required for selenoprotein biosynthesis. The sequence is that of L-seryl-tRNA(Sec) selenium transferase from Desulfovibrio desulfuricans (strain ATCC 27774 / DSM 6949 / MB).